Consider the following 112-residue polypeptide: Ribonuclease P protein component (112 aa).

This sequence belongs to the RnpA family. Consists of a catalytic RNA component (M1 or rnpB) and a protein subunit.

The enzyme catalyses Endonucleolytic cleavage of RNA, removing 5'-extranucleotides from tRNA precursor.. RNaseP catalyzes the removal of the 5'-leader sequence from pre-tRNA to produce the mature 5'-terminus. It can also cleave other RNA substrates such as 4.5S RNA. The protein component plays an auxiliary but essential role in vivo by binding to the 5'-leader sequence and broadening the substrate specificity of the ribozyme. In Mycoplasma mobile (strain ATCC 43663 / 163K / NCTC 11711) (Mesomycoplasma mobile), this protein is Ribonuclease P protein component.